We begin with the raw amino-acid sequence, 155 residues long: UPF0178 protein Gmet_1725 (155 aa).

Belongs to the UPF0178 family.

The chain is UPF0178 protein Gmet_1725 from Geobacter metallireducens (strain ATCC 53774 / DSM 7210 / GS-15).